A 236-amino-acid chain; its full sequence is Protein-L-isoaspartate O-methyltransferase 1 (236 aa).

Residue serine 86 is part of the active site.

Belongs to the methyltransferase superfamily. L-isoaspartyl/D-aspartyl protein methyltransferase family.

The protein resides in the cytoplasm. It carries out the reaction [protein]-L-isoaspartate + S-adenosyl-L-methionine = [protein]-L-isoaspartate alpha-methyl ester + S-adenosyl-L-homocysteine. Functionally, catalyzes the methyl esterification of L-isoaspartyl residues in peptides and proteins that result from spontaneous decomposition of normal L-aspartyl and L-asparaginyl residues. It plays a role in the repair and/or degradation of damaged proteins. In Nitrosospira multiformis (strain ATCC 25196 / NCIMB 11849 / C 71), this protein is Protein-L-isoaspartate O-methyltransferase 1.